The sequence spans 33 residues: NVACVHRTCDSNCKRNGYKSGKCINRKCNCYPH.

3 disulfides stabilise this stretch: C4–C23, C9–C28, and C13–C30.

Expressed by the venom gland.

The protein resides in the secreted. In terms of biological role, inhibits less than 5% of human voltage-gated potassium (Kv) channel Kv1.3/KCNA3 currents at 100nM concentration and does not block human Kv1.1/KCNA1 and Kv1.2/KCNA2 currents. The protein is Potassium channel toxin alpha-KTx 10.5 of Centruroides bonito (Scorpion).